The sequence spans 129 residues: Probable tautomerase YrdN (129 aa).

Pro2 acts as the Proton acceptor; via imino nitrogen in catalysis.

This sequence belongs to the 4-oxalocrotonate tautomerase family.

Putative target of GltR. The protein is Probable tautomerase YrdN (yrdN) of Bacillus subtilis (strain 168).